A 208-amino-acid polypeptide reads, in one-letter code: Imidazole glycerol phosphate synthase subunit HisH (208 aa).

The Glutamine amidotransferase type-1 domain occupies 1-206 (MFAIVDYDTG…KEMVSANDFS (206 aa)). The Nucleophile role is filled by C79. Residues H181 and E183 contribute to the active site.

Heterodimer of HisH and HisF.

The protein resides in the cytoplasm. It carries out the reaction 5-[(5-phospho-1-deoxy-D-ribulos-1-ylimino)methylamino]-1-(5-phospho-beta-D-ribosyl)imidazole-4-carboxamide + L-glutamine = D-erythro-1-(imidazol-4-yl)glycerol 3-phosphate + 5-amino-1-(5-phospho-beta-D-ribosyl)imidazole-4-carboxamide + L-glutamate + H(+). The enzyme catalyses L-glutamine + H2O = L-glutamate + NH4(+). The protein operates within amino-acid biosynthesis; L-histidine biosynthesis; L-histidine from 5-phospho-alpha-D-ribose 1-diphosphate: step 5/9. IGPS catalyzes the conversion of PRFAR and glutamine to IGP, AICAR and glutamate. The HisH subunit catalyzes the hydrolysis of glutamine to glutamate and ammonia as part of the synthesis of IGP and AICAR. The resulting ammonia molecule is channeled to the active site of HisF. The sequence is that of Imidazole glycerol phosphate synthase subunit HisH from Lactiplantibacillus plantarum (strain ATCC BAA-793 / NCIMB 8826 / WCFS1) (Lactobacillus plantarum).